Reading from the N-terminus, the 280-residue chain is Fructose-1,6-bisphosphatase class 1 (280 aa).

The Mg(2+) site is built by E64, D83, L85, and D86. Substrate-binding positions include D86–S89, Y189, and K220. E226 provides a ligand contact to Mg(2+).

This sequence belongs to the FBPase class 1 family. As to quaternary structure, homotetramer. Requires Mg(2+) as cofactor.

Its subcellular location is the cytoplasm. The catalysed reaction is beta-D-fructose 1,6-bisphosphate + H2O = beta-D-fructose 6-phosphate + phosphate. The protein operates within carbohydrate biosynthesis; gluconeogenesis. In Campylobacter jejuni subsp. doylei (strain ATCC BAA-1458 / RM4099 / 269.97), this protein is Fructose-1,6-bisphosphatase class 1.